The primary structure comprises 437 residues: Amino-acid acetyltransferase (437 aa).

Residues 289-429 enclose the N-acetyltransferase domain; it reads ENIRLATSFD…EHYNYQRMSK (141 aa).

It belongs to the acetyltransferase family. ArgA subfamily.

The protein localises to the cytoplasm. The catalysed reaction is L-glutamate + acetyl-CoA = N-acetyl-L-glutamate + CoA + H(+). The protein operates within amino-acid biosynthesis; L-arginine biosynthesis; N(2)-acetyl-L-ornithine from L-glutamate: step 1/4. The polypeptide is Amino-acid acetyltransferase (Actinobacillus pleuropneumoniae serotype 3 (strain JL03)).